The primary structure comprises 186 residues: GTP cyclohydrolase 1 (186 aa).

Residues C78, H81, and C150 each coordinate Zn(2+).

The protein belongs to the GTP cyclohydrolase I family. Toroid-shaped homodecamer, composed of two pentamers of five dimers.

It carries out the reaction GTP + H2O = 7,8-dihydroneopterin 3'-triphosphate + formate + H(+). The protein operates within cofactor biosynthesis; 7,8-dihydroneopterin triphosphate biosynthesis; 7,8-dihydroneopterin triphosphate from GTP: step 1/1. The sequence is that of GTP cyclohydrolase 1 from Enterococcus faecalis (strain ATCC 700802 / V583).